The primary structure comprises 891 residues: Alanine--tRNA ligase (891 aa).

Zn(2+)-binding residues include His564, His568, Cys681, and His685.

It belongs to the class-II aminoacyl-tRNA synthetase family. Zn(2+) serves as cofactor.

Its subcellular location is the cytoplasm. It carries out the reaction tRNA(Ala) + L-alanine + ATP = L-alanyl-tRNA(Ala) + AMP + diphosphate. Catalyzes the attachment of alanine to tRNA(Ala) in a two-step reaction: alanine is first activated by ATP to form Ala-AMP and then transferred to the acceptor end of tRNA(Ala). Also edits incorrectly charged Ser-tRNA(Ala) and Gly-tRNA(Ala) via its editing domain. This Methylorubrum populi (strain ATCC BAA-705 / NCIMB 13946 / BJ001) (Methylobacterium populi) protein is Alanine--tRNA ligase.